The following is a 466-amino-acid chain: Asparagine--tRNA ligase (466 aa).

This sequence belongs to the class-II aminoacyl-tRNA synthetase family. As to quaternary structure, homodimer.

The protein localises to the cytoplasm. It carries out the reaction tRNA(Asn) + L-asparagine + ATP = L-asparaginyl-tRNA(Asn) + AMP + diphosphate + H(+). The protein is Asparagine--tRNA ligase of Psychromonas ingrahamii (strain DSM 17664 / CCUG 51855 / 37).